A 710-amino-acid chain; its full sequence is DNA topoisomerase 1 (710 aa).

Residues 1–22 (MPTSTKSKTKTTTKKKTTRKRV) form a disordered region. Residues 7 to 22 (SKTKTTTKKKTTRKRV) are compositionally biased toward basic residues. In terms of domain architecture, Toprim spans 26 to 136 (KNLVIVESPA…EKNRVVFNEI (111 aa)). Glutamate 32 and aspartate 105 together coordinate Mg(2+). Residues 152-574 (DVDLVDAQQA…QFYKPFAKEL (423 aa)) enclose the Topo IA-type catalytic domain. The tract at residues 186–191 (SAGRVQ) is interaction with DNA. Tyrosine 321 acts as the O-(5'-phospho-DNA)-tyrosine intermediate in catalysis. 2 C4-type zinc fingers span residues 595–621 (CDVCGSPMVIKLGRFGKFYACSNFPDC) and 635–663 (CPLCHEGNIIERKTKKNRIFYGCDRYPDC). A C4-type 3; atypical zinc finger spans residues 676–702 (CPKSGHFLVEKKVRGGGKQVVCSNDEC).

The protein belongs to the type IA topoisomerase family. As to quaternary structure, monomer. The cofactor is Mg(2+).

It catalyses the reaction ATP-independent breakage of single-stranded DNA, followed by passage and rejoining.. Functionally, releases the supercoiling and torsional tension of DNA, which is introduced during the DNA replication and transcription, by transiently cleaving and rejoining one strand of the DNA duplex. Introduces a single-strand break via transesterification at a target site in duplex DNA. The scissile phosphodiester is attacked by the catalytic tyrosine of the enzyme, resulting in the formation of a DNA-(5'-phosphotyrosyl)-enzyme intermediate and the expulsion of a 3'-OH DNA strand. The free DNA strand then undergoes passage around the unbroken strand, thus removing DNA supercoils. Finally, in the religation step, the DNA 3'-OH attacks the covalent intermediate to expel the active-site tyrosine and restore the DNA phosphodiester backbone. This chain is DNA topoisomerase 1, found in Lactococcus lactis subsp. lactis (strain IL1403) (Streptococcus lactis).